We begin with the raw amino-acid sequence, 1348 residues long: Adhesion G protein-coupled receptor F5 (1348 aa).

The N-terminal stretch at 1–21 (MRSPRTFTFYFLLLVICSSEA) is a signal peptide. Residues 22-1019 (ALSTPTEPIV…LKILLDIISY (998 aa)) are Extracellular-facing. The 109-residue stretch at 163-271 (PEAFITLKLK…NSFQGTPSNE (109 aa)) folds into the SEA domain. Ig-like domains follow at residues 268-366 (PSNE…LDVT), 367-464 (PIRI…IAVT), and 469-559 (ANLT…KDVT). Asn270, Asn286, Asn337, and Asn349 each carry an N-linked (GlcNAc...) asparagine glycan. Cys291 and Cys348 are oxidised to a cystine. Cys389 and Cys447 are oxidised to a cystine. Asn470, Asn538, and Asn665 each carry an N-linked (GlcNAc...) asparagine glycan. Cys490 and Cys543 form a disulfide bridge. Ser818 is subject to Phosphoserine. The region spanning 841-1005 (TPPFLAHPNV…SILMSPDSPD (165 aa)) is the GAIN-B domain. 2 disulfide bridges follow: Cys953–Cys987 and Cys972–Cys989. The GPS stretch occupies residues 953 to 1005 (CVFWNFSLANNTGGWDSSGCSVEDDGRDNRDRVFCKCNHLTSFSILMSPDSPD). The tract at residues 993–1008 (TSFSILMSPDSPDPGS) is tethered agonist. Residues 1020-1040 (IGLGFSIVSLAACLVVEAMVW) traverse the membrane as a helical segment. At 1041-1055 (KSVTKNRTSYMRHIC) the chain is on the cytoplasmic side. A helical membrane pass occupies residues 1056–1076 (IVNIAFCLLIADIWFIVAGAI). The Extracellular portion of the chain corresponds to 1077-1092 (HDGRYPLNETACVAAT). The helical transmembrane segment at 1093–1113 (FFIHFFYLSVFFWMLTLGLML) threads the bilayer. At 1114 to 1130 (FYRLIFILHDASKSTQK) the chain is on the cytoplasmic side. Residues 1131 to 1151 (AIAFSLGYGCPLIISSITVGV) form a helical membrane-spanning segment. Residues 1152–1175 (TQPQEVYMRKNACWLNWEDTRALL) lie on the Extracellular side of the membrane. The helical transmembrane segment at 1176-1196 (AFAIPALIIVVVNVSITVVVI) threads the bilayer. Residues 1197-1221 (TKILRPSIGDKPGKQEKSSLFQISK) lie on the Cytoplasmic side of the membrane. Residues 1222–1242 (SIGVLTPLLGLTWGFGLATVI) traverse the membrane as a helical segment. At 1243-1250 (QGSNAVFH) the chain is on the extracellular side. A helical transmembrane segment spans residues 1251–1271 (IIFTLLNAFQGLFILLFGCLW). At 1272 to 1348 (DQKVQEALLH…NSSSAYSLLN (77 aa)) the chain is on the cytoplasmic side. Thr1302 is subject to Phosphothreonine. Ser1309 carries the phosphoserine modification. Residues 1328-1348 (STPETTSSSLENSSSAYSLLN) form a disordered region.

The protein belongs to the G-protein coupled receptor 2 family. Adhesion G-protein coupled receptor (ADGR) subfamily. As to quaternary structure, homodimer; disulfide-linked. Heterodimer of 2 chains generated by proteolytic processing; the large extracellular N-terminal fragment and the membrane-bound C-terminal fragment predominantly remain associated and non-covalently linked. Fragment generates by the processing enzyme furin remains attached to the extracellular N-terminal fragment. Interacts (via N-terminal extracellular domain) with SFTPD. Post-translationally, highly glycosylated. Proteolytically cleaved at multiple sites: one in the GPS region of the GAIN-B domain (S1 site) and the other in the SEA domain (S2 site). The proteolytic cleavage at S1 site generates an extracellular subunit and a seven-transmembrane subunit. The proteolytic cleavage at S2 site generates a fragment that undergoes proteolytic cleavage by the processing enzyme furin. Widely expressed, with highest levels in lung, pancreas, kidney and heart. In the kidney, expressed more abundantly in the medulla than in the cortex, predominantly expressed in A-intercalated cells (at protein level). Expressed in endothelial cells from various tissues, including brain, heart, kidney, liver, lung and muscle. In the lung, expressed in alveolar type II (ATII) cells (at protein level). Expressed in pancreatic islets of Langerhans, predominantly in delta cells, as well as in endothelial cells. Expressed in white adipose tissue.

Its subcellular location is the cell membrane. As an adhesion G protein-coupled receptor (aGPCR) exhibits a large N-terminal extracellular domain containing highly conserved GPCR autoproteolysis-inducing (GAIN) domain. During synthesis, intracellular autoproteolytic processing of nascent chain within the GAIN domain generates a mature protein, consisting of an N-terminal fragment that is non-covalently linked to the C-terminal fragment. The mature protein is routed to the plasma membrane where the N- and C-terminal fragments remain associated, forming the holoreceptor. Dissociation of the aGPCR fragments stimulates G protein signaling through the action of the tethered-peptide agonist stalk that is occluded within the GAIN domain in the holoreceptor form. This dissociation might be induced by ligand binding, such as that of sFNDC4. In terms of biological role, adhesion G protein-coupled receptor. In alveolar type II (ATII or AT2) cells, required for normal lung surfactant homeostasis. Modulation of both surfactant secretion and uptake by ATII cells is mediated by the downstream activation of GNAQ/GNA11 proteins and may be a consequence of increased cortical F-actin assembly induced by ADGRF5 activation. In the kidney, may play a role in the regulation of acid excretion into the primary urine, possibly by regulating the surface expression of V-ATPase proton pump. As a receptor for soluble FNDC4 (sFNDC4), required for proper systemic glucose tolerance, specifically sensitizing white adipose tissue to insulin. Also plays a role in sFNDC4-induced decrease of local inflammation in white adipose tissue. This is Adhesion G protein-coupled receptor F5 (Adgrf5) from Mus musculus (Mouse).